Reading from the N-terminus, the 506-residue chain is Histidine ammonia-lyase (506 aa).

The 5-imidazolinone (Ala-Gly) cross-link spans 142 to 144 (ASG). The residue at position 143 (S143) is a 2,3-didehydroalanine (Ser).

Belongs to the PAL/histidase family. Post-translationally, contains an active site 4-methylidene-imidazol-5-one (MIO), which is formed autocatalytically by cyclization and dehydration of residues Ala-Ser-Gly.

It is found in the cytoplasm. The catalysed reaction is L-histidine = trans-urocanate + NH4(+). It functions in the pathway amino-acid degradation; L-histidine degradation into L-glutamate; N-formimidoyl-L-glutamate from L-histidine: step 1/3. This chain is Histidine ammonia-lyase, found in Bacillus cereus (strain ATCC 14579 / DSM 31 / CCUG 7414 / JCM 2152 / NBRC 15305 / NCIMB 9373 / NCTC 2599 / NRRL B-3711).